We begin with the raw amino-acid sequence, 251 residues long: Triosephosphate isomerase (251 aa).

A substrate-binding site is contributed by 9-11 (NWK). The active-site Electrophile is the histidine 96. The Proton acceptor role is filled by glutamate 167. Residues glycine 173, serine 213, and 234 to 235 (GG) each bind substrate.

This sequence belongs to the triosephosphate isomerase family. As to quaternary structure, homodimer.

It localises to the cytoplasm. The catalysed reaction is D-glyceraldehyde 3-phosphate = dihydroxyacetone phosphate. It participates in carbohydrate biosynthesis; gluconeogenesis. Its pathway is carbohydrate degradation; glycolysis; D-glyceraldehyde 3-phosphate from glycerone phosphate: step 1/1. In terms of biological role, involved in the gluconeogenesis. Catalyzes stereospecifically the conversion of dihydroxyacetone phosphate (DHAP) to D-glyceraldehyde-3-phosphate (G3P). The protein is Triosephosphate isomerase of Phocaeicola vulgatus (strain ATCC 8482 / DSM 1447 / JCM 5826 / CCUG 4940 / NBRC 14291 / NCTC 11154) (Bacteroides vulgatus).